The following is a 366-amino-acid chain: MSKRDYYEVLGVSKSASKDEIKKAYRRLAKKYHPDVSKEENAVEKFKEVQEAYEVLSDEQKRAQYDQFGHAGSSQGFGGGDFGGGFGFEDIFSSFFGGGSRRRDPNAPRQGADLQYQVTLEFEEAIFGKELNVEIPVEDPCDTCHGSGAKPGTTKETCKYCSGTGQISVEQNTPFGRIVNRQTCRHCSGTGQMIKEKCTTCHGTGKVRKRKKINVKIPAGIDNGQQIRVAGKGEAGVNGGPAGDLYVVVHVREHEFFERDGDHIICEMPLTFAQAALGAEVEVPTVHGKVKLKIPAGTQTGTEFRLKGKGAPNVRGYGQGDQYVVVRVVVPTNLTAHQKELLREFAGQEDKDDSLFGKLKRAFKGE.

Residues 5–69 (DYYEVLGVSK…QKRAQYDQFG (65 aa)) enclose the J domain. The CR-type zinc-finger motif lies at 128–210 (GKELNVEIPV…CHGTGKVRKR (83 aa)). 8 residues coordinate Zn(2+): Cys-141, Cys-144, Cys-158, Cys-161, Cys-184, Cys-187, Cys-198, and Cys-201. 4 CXXCXGXG motif repeats span residues 141–148 (CDTCHGSG), 158–165 (CKYCSGTG), 184–191 (CRHCSGTG), and 198–205 (CTTCHGTG).

The protein belongs to the DnaJ family. Homodimer. Requires Zn(2+) as cofactor.

It is found in the cytoplasm. Its function is as follows. Participates actively in the response to hyperosmotic and heat shock by preventing the aggregation of stress-denatured proteins and by disaggregating proteins, also in an autonomous, DnaK-independent fashion. Unfolded proteins bind initially to DnaJ; upon interaction with the DnaJ-bound protein, DnaK hydrolyzes its bound ATP, resulting in the formation of a stable complex. GrpE releases ADP from DnaK; ATP binding to DnaK triggers the release of the substrate protein, thus completing the reaction cycle. Several rounds of ATP-dependent interactions between DnaJ, DnaK and GrpE are required for fully efficient folding. Also involved, together with DnaK and GrpE, in the DNA replication of plasmids through activation of initiation proteins. In Bacillus cytotoxicus (strain DSM 22905 / CIP 110041 / 391-98 / NVH 391-98), this protein is Chaperone protein DnaJ.